The sequence spans 282 residues: Cyanocobalamin reductase / alkylcobalamin dealkylase (282 aa).

Substrate contacts are provided by residues aspartate 104, 115-118, 129-131, cysteine 149, and isoleucine 160; these read ILAQ and YYQ. The segment at 234 to 282 is disordered; sequence LGLAQPSEKPSSPSPDLPFTTPAPKKPGNPSRARSWLSPRVSPPASPGP. Residues serine 245, serine 247, serine 275, and serine 279 each carry the phosphoserine modification.

It belongs to the MMACHC family. Monomer in the absence of bound substrate. Homodimer; dimerization is triggered by binding to FMN or adenosylcobalamin. Interacts with LMBRD1 and ABCD4; the interaction ensures the transport of cobalamin from the lysosome to the cytoplasm. Forms a multiprotein complex with MMADHC, MTR and MTRR; the interaction with MTR could modulate MMACHC-dependent processing of cobalamin. Heterodimer with MMADHC; the interaction might play a role in the regulation of the balance between AdoCbl and MeCbl synthesis. It depends on FAD as a cofactor. FMN serves as cofactor. In terms of tissue distribution, widely expressed. Expressed at higher level in fetal liver. Also expressed in spleen, lymph node, thymus and bone marrow. Weakly or not expressed in peripheral blood leukocytes.

The protein resides in the cytoplasm. The protein localises to the cytosol. It catalyses the reaction 2 cob(II)alamin-[cyanocobalamin reductase] + 2 hydrogen cyanide + NADP(+) = 2 cyanocob(III)alamin + 2 apo-[cyanocobalamin reductase] + NADPH + H(+). It carries out the reaction apo-[alkylcobalamin reductase] + an R-cob(III)alamin + glutathione = cob(I)alamin-[alkylcobalamin reductase] + an S-substituted glutathione + H(+). The enzyme catalyses apo-[alkylcobalamin reductase] + methylcob(III)alamin + glutathione = S-methyl glutathione + cob(I)alamin-[alkylcobalamin reductase] + H(+). The catalysed reaction is apo-[alkylcobalamin reductase] + adenosylcob(III)alamin + glutathione = S-adenosylglutathione + cob(I)alamin-[alkylcobalamin reductase] + H(+). In terms of biological role, cobalamin (vitamin B12) cytosolic chaperone that catalyzes the reductive decyanation of cyanocob(III)alamin (cyanocobalamin, CNCbl) to yield cob(II)alamin and cyanide, using FAD or FMN as cofactors and NADPH as cosubstrate. Cyanocobalamin constitutes the inactive form of vitamin B12 introduced from the diet, and is converted into the active cofactors methylcobalamin (MeCbl) involved in methionine biosynthesis, and 5'-deoxyadenosylcobalamin (AdoCbl) involved in the TCA cycle. Forms a complex with the lysosomal transporter ABCD4 and its chaperone LMBRD1, to transport cobalamin across the lysosomal membrane into the cytosol. The processing of cobalamin in the cytosol occurs in a multiprotein complex composed of at least MMACHC, MMADHC, MTRR (methionine synthase reductase) and MTR (methionine synthase) which may contribute to shuttle safely and efficiently cobalamin towards MTR in order to produce methionine. Also acts as a glutathione transferase by catalyzing the dealkylation of the alkylcob(III)alamins MeCbl and AdoCbl, using the thiolate of glutathione for nucleophilic displacement to generate cob(I)alamin and the corresponding glutathione thioether. The conversion of incoming MeCbl or AdoCbl into a common intermediate cob(I)alamin is necessary to meet the cellular needs for both cofactors. Cysteine and homocysteine cannot substitute for glutathione in this reaction. In Homo sapiens (Human), this protein is Cyanocobalamin reductase / alkylcobalamin dealkylase.